Reading from the N-terminus, the 463-residue chain is Argininosuccinate lyase (463 aa).

This sequence belongs to the lyase 1 family. Argininosuccinate lyase subfamily.

It localises to the cytoplasm. It carries out the reaction 2-(N(omega)-L-arginino)succinate = fumarate + L-arginine. Its pathway is amino-acid biosynthesis; L-arginine biosynthesis; L-arginine from L-ornithine and carbamoyl phosphate: step 3/3. In Streptococcus pneumoniae (strain JJA), this protein is Argininosuccinate lyase.